We begin with the raw amino-acid sequence, 424 residues long: Protein maelstrom 1 (424 aa).

The HMG box DNA-binding region spans 2–69 (PPKKHSGFMM…LTRVKKERLN (68 aa)).

Belongs to the maelstrom family.

It localises to the cytoplasm. The protein localises to the nucleus. Its function is as follows. Involved both in the piRNA and miRNA metabolic processes. As a component of the meiotic nuage, plays a central role during oogenesis by repressing transposable elements and preventing their mobilization, which is essential for the germline integrity. Repression of transposable elements is mediated via the piRNA metabolic process, which mediates the repression of transposable elements during meiosis by forming complexes composed of piRNAs and Piwi proteins and governs the repression of transposons. As a nuclear component, it is required for proper differentiation in the germline stem cell (GSC) lineage by repressing microRNA-7 (miR-7), thereby acting as an indirect regulator of bag-of-marbles (Bam). Acts by binding to the promoter of miR-7 gene and repressing its expression; miR-7 repression alleviates the Bam repression by miR-7, thereby allowing differentiation in the germline stem cell (GSC) lineage. The chain is Protein maelstrom 1 (mael1) from Drosophila ananassae (Fruit fly).